Consider the following 1138-residue polypeptide: Mastermind-like protein 3 (1138 aa).

Residues 37–48 (PNSTPAAPSSNH) are compositionally biased toward polar residues. 6 disordered regions span residues 37–68 (PNST…AAVP), 119–148 (EQRA…ASAE), 169–188 (RSPL…FSPT), 207–237 (PSNM…THTP), 334–480 (EEKK…QRAK), and 503–547 (QQQQ…PQAF). Gly residues predominate over residues 52–64 (GGCGGSGGPGGGS). Composition is skewed to polar residues over residues 130–139 (GKQQHPSKPQ) and 173–188 (NGDQ…FSPT). Composition is skewed to polar residues over residues 343–359 (QPAT…SVKS) and 372–394 (GSPQ…ATSL). Positions 395 to 411 (PSVASTPAAPNPASSPA) are enriched in low complexity. Residues 414–426 (AVQSPQTPNQAHT) show a composition bias toward polar residues. Positions 467-480 (QLKQMAAQQQQRAK) are enriched in low complexity. Position 603 is an N6-acetyllysine (lysine 603). Disordered regions lie at residues 615–662 (RMTP…PRAH), 691–721 (HGQE…MVSG), 968–991 (LQGM…YPLQ), 1024–1084 (AAMG…SQAY), and 1090–1109 (QDVS…PGLP). Residues 633-649 (QQQQQQQQQQQQQQQQQ) are compositionally biased toward low complexity. Over residues 1064–1084 (PPAQQQIPSGSFAPSSQSQAY) the composition is skewed to polar residues.

This sequence belongs to the mastermind family. In terms of assembly, interacts through its N-terminal region with the ankyrin repeat region of the Notch proteins NOTCH1, NOTCH2, NOTCH3 and NOTCH4. Forms a DNA-binding complex with Notch proteins and RBPSUH/RBP-J kappa.

Its subcellular location is the nucleus speckle. In terms of biological role, acts as a transcriptional coactivator for NOTCH proteins. Has been shown to amplify NOTCH-induced transcription of HES1. The polypeptide is Mastermind-like protein 3 (Homo sapiens (Human)).